Here is a 557-residue protein sequence, read N- to C-terminus: Ribonuclease J 2 (557 aa).

Histidine 76, histidine 78, histidine 144, and glutamate 166 together coordinate Zn(2+). 366-370 contributes to the substrate binding site; the sequence is HASSH.

Belongs to the metallo-beta-lactamase superfamily. RNA-metabolizing metallo-beta-lactamase-like family. Bacterial RNase J subfamily. As to quaternary structure, homodimer, may be a subunit of the RNA degradosome. Zn(2+) serves as cofactor.

The protein localises to the cytoplasm. In terms of biological role, an RNase that has 5'-3' exonuclease and possibly endoonuclease activity. Involved in maturation of rRNA and in some organisms also mRNA maturation and/or decay. This chain is Ribonuclease J 2, found in Staphylococcus saprophyticus subsp. saprophyticus (strain ATCC 15305 / DSM 20229 / NCIMB 8711 / NCTC 7292 / S-41).